The following is a 168-amino-acid chain: Protein GrpE (168 aa).

It belongs to the GrpE family. Homodimer.

It localises to the cytoplasm. Functionally, participates actively in the response to hyperosmotic and heat shock by preventing the aggregation of stress-denatured proteins, in association with DnaK and GrpE. It is the nucleotide exchange factor for DnaK and may function as a thermosensor. Unfolded proteins bind initially to DnaJ; upon interaction with the DnaJ-bound protein, DnaK hydrolyzes its bound ATP, resulting in the formation of a stable complex. GrpE releases ADP from DnaK; ATP binding to DnaK triggers the release of the substrate protein, thus completing the reaction cycle. Several rounds of ATP-dependent interactions between DnaJ, DnaK and GrpE are required for fully efficient folding. This chain is Protein GrpE, found in Thermotoga neapolitana (strain ATCC 49049 / DSM 4359 / NBRC 107923 / NS-E).